The primary structure comprises 397 residues: Trans-2-enoyl-CoA reductase [NADH] (397 aa).

Residues 53–58, 79–80, 116–117, and 144–145 each bind NAD(+); these read GCSNGY, FE, DA, and LA. Tyrosine 230 is a binding site for substrate. Tyrosine 240 serves as the catalytic Proton donor. NAD(+)-binding positions include lysine 249 and 276 to 278; that span reads LVT.

This sequence belongs to the TER reductase family. As to quaternary structure, monomer.

It carries out the reaction a 2,3-saturated acyl-CoA + NAD(+) = a (2E)-enoyl-CoA + NADH + H(+). The protein operates within lipid metabolism; fatty acid biosynthesis. With respect to regulation, inhibited by lauroyl-CoA. Functionally, involved in the fatty acid synthesis (FAS II). Catalyzes the reduction of the carbon-carbon double bond of crotonyl-CoA to yield butyryl-CoA. In vitro it can also use hexenoyl-CoA and dodecenoyl-CoA as substrates. This is Trans-2-enoyl-CoA reductase [NADH] from Treponema denticola (strain ATCC 35405 / DSM 14222 / CIP 103919 / JCM 8153 / KCTC 15104).